The chain runs to 217 residues: Adenylate kinase (217 aa).

G10–T15 contributes to the ATP binding site. The interval S30–V59 is NMP. AMP contacts are provided by residues T31, R36, E57 to V59, G85 to R88, and Q92. An LID region spans residues Y126–D163. Residue R127 participates in ATP binding. Residues C130 and C133 each contribute to the Zn(2+) site. V136–Y137 serves as a coordination point for ATP. Zn(2+)-binding residues include C150 and C153. Residues R160 and R171 each contribute to the AMP site. Position 199 (K199) interacts with ATP.

It belongs to the adenylate kinase family. In terms of assembly, monomer.

The protein resides in the cytoplasm. The enzyme catalyses AMP + ATP = 2 ADP. The protein operates within purine metabolism; AMP biosynthesis via salvage pathway; AMP from ADP: step 1/1. Functionally, catalyzes the reversible transfer of the terminal phosphate group between ATP and AMP. Plays an important role in cellular energy homeostasis and in adenine nucleotide metabolism. The polypeptide is Adenylate kinase (Archaeoglobus fulgidus (strain ATCC 49558 / DSM 4304 / JCM 9628 / NBRC 100126 / VC-16)).